Consider the following 340-residue polypeptide: Predicted GPI-anchored protein 46 (340 aa).

The first 29 residues, 1–29, serve as a signal peptide directing secretion; the sequence is MKILLIYSMTPKLVIWFTLFVLCLQMGDT. Over residues 99 to 115 the composition is skewed to low complexity; the sequence is SETTTTTTQESETSIAT. Disordered stretches follow at residues 99–154 and 181–212; these read SETT…SLSS and MSSS…IKNY. N-linked (GlcNAc...) asparagine glycosylation occurs at N127. The segment covering 182-191 has biased composition (low complexity); it reads SSSSSSSSGS. Residues 192 to 202 are compositionally biased toward basic and acidic residues; the sequence is LRDKSKLKQEN. N270 carries an N-linked (GlcNAc...) asparagine glycan. The GPI-anchor amidated asparagine moiety is linked to residue N314. Residues 315–340 constitute a propeptide, removed in mature form; it reads SAPLLWIKISKPTVCLVIALTFLLLG.

Its subcellular location is the cell membrane. It localises to the secreted. The polypeptide is Predicted GPI-anchored protein 46 (PGA46) (Candida albicans (strain SC5314 / ATCC MYA-2876) (Yeast)).